We begin with the raw amino-acid sequence, 134 residues long: Small ribosomal subunit protein uS8c (134 aa).

This sequence belongs to the universal ribosomal protein uS8 family. Part of the 30S ribosomal subunit.

It localises to the plastid. It is found in the chloroplast. Functionally, one of the primary rRNA binding proteins, it binds directly to 16S rRNA central domain where it helps coordinate assembly of the platform of the 30S subunit. This is Small ribosomal subunit protein uS8c (rps8) from Draba nemorosa (Woodland whitlowgrass).